The following is a 214-amino-acid chain: Thymidylate kinase (214 aa).

Residue 13-20 participates in ATP binding; that stretch reads GPDACGKS.

It belongs to the thymidylate kinase family.

The catalysed reaction is dTMP + ATP = dTDP + ADP. Its function is as follows. Phosphorylation of dTMP to form dTDP in both de novo and salvage pathways of dTTP synthesis. This Malacoplasma penetrans (strain HF-2) (Mycoplasma penetrans) protein is Thymidylate kinase.